Reading from the N-terminus, the 406-residue chain is Cysteine desulfurase (406 aa).

Lysine 226 bears the N6-(pyridoxal phosphate)lysine mark. Cysteine 364 (cysteine persulfide intermediate) is an active-site residue.

This sequence belongs to the class-V pyridoxal-phosphate-dependent aminotransferase family. Csd subfamily. Homodimer. Interacts with SufE and the SufBCD complex composed of SufB, SufC and SufD. The interaction with SufE is required to mediate the direct transfer of the sulfur atom from the S-sulfanylcysteine. Pyridoxal 5'-phosphate serves as cofactor.

It is found in the cytoplasm. It catalyses the reaction (sulfur carrier)-H + L-cysteine = (sulfur carrier)-SH + L-alanine. It carries out the reaction L-selenocysteine + AH2 = hydrogenselenide + L-alanine + A + H(+). The protein operates within cofactor biosynthesis; iron-sulfur cluster biosynthesis. In terms of biological role, cysteine desulfurases mobilize the sulfur from L-cysteine to yield L-alanine, an essential step in sulfur metabolism for biosynthesis of a variety of sulfur-containing biomolecules. Component of the suf operon, which is activated and required under specific conditions such as oxidative stress and iron limitation. Acts as a potent selenocysteine lyase in vitro, that mobilizes selenium from L-selenocysteine. Selenocysteine lyase activity is however unsure in vivo. This is Cysteine desulfurase from Escherichia coli (strain SE11).